A 264-amino-acid polypeptide reads, in one-letter code: 3-methyl-2-oxobutanoate hydroxymethyltransferase (264 aa).

Asp-45 and Asp-84 together coordinate Mg(2+). 3-methyl-2-oxobutanoate is bound by residues 45–46 (DS), Asp-84, and Lys-112. Glu-114 is a Mg(2+) binding site. Residue Glu-181 is the Proton acceptor of the active site.

Belongs to the PanB family. In terms of assembly, homodecamer; pentamer of dimers. The cofactor is Mg(2+).

It is found in the cytoplasm. It carries out the reaction 3-methyl-2-oxobutanoate + (6R)-5,10-methylene-5,6,7,8-tetrahydrofolate + H2O = 2-dehydropantoate + (6S)-5,6,7,8-tetrahydrofolate. It participates in cofactor biosynthesis; (R)-pantothenate biosynthesis; (R)-pantoate from 3-methyl-2-oxobutanoate: step 1/2. Its function is as follows. Catalyzes the reversible reaction in which hydroxymethyl group from 5,10-methylenetetrahydrofolate is transferred onto alpha-ketoisovalerate to form ketopantoate. This chain is 3-methyl-2-oxobutanoate hydroxymethyltransferase, found in Vibrio cholerae serotype O1 (strain ATCC 39541 / Classical Ogawa 395 / O395).